The sequence spans 161 residues: Anaerobic nitrite reductase Glb1-2 (161 aa).

Residues 9–158 (AFTEEQEALV…LASAIIAEMK (150 aa)) form the Globin domain. The Homodimerization signature appears at 42–46 (EIAPP). The heme b site is built by Ser-52, Lys-66, His-70, Lys-100, Thr-104, and His-105. A Homodimerization motif is present at residues 112 to 124 (PEHFEVTKQALLD).

This sequence belongs to the plant globin family. In terms of assembly, homodimer. Heme b is required as a cofactor. Mainly expressed in root nodules and leaves, and, to a lower extent, in roots, stems, flowers and fruits. Accumulates in mature root nodules.

It catalyses the reaction Fe(III)-heme b-[protein] + nitric oxide + H2O = Fe(II)-heme b-[protein] + nitrite + 2 H(+). Functionally, phytoglobin that reduces nitrite to nitric oxide (NO) under anoxic conditions (e.g. during flooding or in waterlogged soil) and upon root nodulation. Required for general plant development and during nodulation, especially for the onset of symbiosis. Monitors nitric oxide (NO) levels during early phase of the nitrogen-fixing symbiosis and buffers oxygen in functioning nodules. Necessary for the production of pods. May not function as an oxygen storage or transport protein. Has an unusually high affinity for O(2) through a hexacoordinate heme iron because of a very low dissociation constant. The chain is Anaerobic nitrite reductase Glb1-2 from Lotus japonicus (Lotus corniculatus var. japonicus).